Consider the following 565-residue polypeptide: SRSF protein kinase 3 (565 aa).

Positions 1 to 44 (MSANAGGSGSVDCGGSSSSSQTSCGPESSGSELTPATPAPRLLQ) are disordered. The span at 10–31 (SVDCGGSSSSSQTSCGPESSGS) shows a compositional bias: low complexity. S49 is modified (phosphoserine). Residues 78–563 (YHVVRKLGWG…AADCLQHPWL (486 aa)) form the Protein kinase domain. ATP-binding positions include 84 to 92 (LGWGHFSTV) and K107. Catalysis depends on D211, which acts as the Proton acceptor. The span at 236–253 (WQQSGAQPPSRSTVSTAP) shows a compositional bias: polar residues. Disordered regions lie at residues 236–280 (WQQS…KRLL) and 295–350 (AAVQ…QTSG). Positions 262–277 (SKNKRKKMRRKRKQQK) are enriched in basic residues. The segment covering 325-350 (AGPSPASSSPVPGGERSLSPSSQTSG) has biased composition (low complexity). S328 carries the phosphoserine modification.

The protein belongs to the protein kinase superfamily. CMGC Ser/Thr protein kinase family. Exclusively expressed in skeletal and heart muscle.

It localises to the nucleus. It is found in the cytoplasm. It carries out the reaction L-seryl-[protein] + ATP = O-phospho-L-seryl-[protein] + ADP + H(+). The enzyme catalyses L-threonyl-[protein] + ATP = O-phospho-L-threonyl-[protein] + ADP + H(+). Its function is as follows. Serine/arginine-rich protein-specific kinase which specifically phosphorylates its substrates at serine residues located in regions rich in arginine/serine dipeptides, known as RS domains. Phosphorylates the SR splicing factor SRSF1 and the lamin-B receptor (LBR) in vitro. Required for normal muscle development. This Mus musculus (Mouse) protein is SRSF protein kinase 3 (Srpk3).